The following is a 188-amino-acid chain: dITP/XTP pyrophosphatase (188 aa).

10–15 (TSNPHK) provides a ligand contact to substrate. E39 and D69 together coordinate Mg(2+). D69 acts as the Proton acceptor in catalysis. Residues S70, 145–148 (FGFD), K168, and 173–174 (HR) each bind substrate.

Belongs to the HAM1 NTPase family. In terms of assembly, homodimer. Mg(2+) is required as a cofactor.

The catalysed reaction is XTP + H2O = XMP + diphosphate + H(+). The enzyme catalyses dITP + H2O = dIMP + diphosphate + H(+). It carries out the reaction ITP + H2O = IMP + diphosphate + H(+). Its function is as follows. Pyrophosphatase that catalyzes the hydrolysis of nucleoside triphosphates to their monophosphate derivatives, with a high preference for the non-canonical purine nucleotides XTP (xanthosine triphosphate), dITP (deoxyinosine triphosphate) and ITP. Seems to function as a house-cleaning enzyme that removes non-canonical purine nucleotides from the nucleotide pool, thus preventing their incorporation into DNA/RNA and avoiding chromosomal lesions. The chain is dITP/XTP pyrophosphatase from Ignicoccus hospitalis (strain KIN4/I / DSM 18386 / JCM 14125).